Reading from the N-terminus, the 147-residue chain is Small ribosomal subunit protein eS19 (147 aa).

It belongs to the eukaryotic ribosomal protein eS19 family. Component of the small ribosomal subunit.

Its subcellular location is the cytoplasm. The protein localises to the nucleus. In terms of biological role, component of the small ribosomal subunit. The ribosome is a large ribonucleoprotein complex responsible for the synthesis of proteins in the cell. Required for pre-rRNA processing and maturation of 40S ribosomal subunits. In Ictalurus punctatus (Channel catfish), this protein is Small ribosomal subunit protein eS19 (rps19).